A 312-amino-acid chain; its full sequence is MAIPAIQPYQMPTASDMPQNKVSWVPDPNRAVLLIHDMQNYFVDAFTAGASPVTELSANIRKLKNQCVQLGIPVVYTAQPGSQNPDDRALLTDFWGPGLNSGPYEEKIITELAPEDDDLVLTKWRYSAFKRTNLLEMMRKEGRDQLIITGIYAHIGCLVTACEAFMEDIKAFFVGDAVADFSLEKHQMALEYAAGRCAFTVMTDSLLDQLQNAPADVQKTSANTGKKNVFTCENIRKQIAELLQETPEDITDQEDLLDRGLDSVRIMTLVEQWRREGAEVTFVELAERPTIEEWQKLLTTRSQQVLPNADYL.

The region spanning 229–302 (VFTCENIRKQ…EWQKLLTTRS (74 aa)) is the Carrier domain. Ser-263 bears the O-(pantetheine 4'-phosphoryl)serine mark.

This sequence belongs to the isochorismatase family.

The catalysed reaction is isochorismate + H2O = (2S,3S)-2,3-dihydroxy-2,3-dihydrobenzoate + pyruvate. It functions in the pathway siderophore biosynthesis; bacillibactin biosynthesis. The chain is Isochorismatase (dhbB) from Bacillus subtilis (strain 168).